The sequence spans 173 residues: Mesencephalic astrocyte-derived neurotrophic factor homolog (173 aa).

Positions 1 to 22 are cleaved as a signal peptide; sequence MKTTHLVLVLCFLAGVAQTTLA. Cystine bridges form between C28-C114, C31-C103, C61-C72, and C148-C151.

It belongs to the ARMET family.

The protein resides in the secreted. Required during the maturation of the embryonic nervous system for maintenance of neuronal and cuticular connectivity. Essential for maintenance of dopaminergic neurons and dopamine levels. The protein is Mesencephalic astrocyte-derived neurotrophic factor homolog of Drosophila persimilis (Fruit fly).